The chain runs to 394 residues: MGIKQLFSVIKDEAPDAIKEGEIKNQFGRKVAIDASMSIYSFLIAVRSDGQQLMNEAGETTSHLMGMFYRTLRMVDNGIKPLYVFDGAPPKLKSGELAKRFQRKQEATEGLEEAKETGTAEDVEKFSRRTVRVTREHNAECQKLLKLMGIPYIVAPTEAEAQCAVLARAGKVYAAASEDMDTLCFNAPILLRHLTFSEQRKEPIQEIHLEKVLEGLGMERKQFIDLCILLGCDYLDPIPKVGPSTALKLIREHGTLEKVVEWMKADPKGRYQIPEDWPFEDARTLFFEPDVRPADDPLCDFKWDKPDIEGLIQFLVHEKGFSEDRVRSAGTKLEKNMKTSQQARIEGFFKILPKTEEEKKAHKRKLEEQAEQKRKKVKEEKKEKAKLKAKPRGA.

The tract at residues 1–104 (MGIKQLFSVI…GELAKRFQRK (104 aa)) is N-domain. Position 34 (Asp34) interacts with Mg(2+). Positions 47 and 70 each coordinate DNA. Mg(2+)-binding residues include Asp86, Glu158, Glu160, Asp179, and Asp181. Positions 122–253 (DVEKFSRRTV…STALKLIREH (132 aa)) are I-domain. Glu158 contacts DNA. The DNA site is built by Gly231 and Asp233. Mg(2+) is bound at residue Asp233. Positions 341 to 349 (QQARIEGFF) are interaction with PCNA. A compositionally biased stretch (basic and acidic residues) spans 356-383 (EEEKKAHKRKLEEQAEQKRKKVKEEKKE). The interval 356-394 (EEEKKAHKRKLEEQAEQKRKKVKEEKKEKAKLKAKPRGA) is disordered. Over residues 384-394 (KAKLKAKPRGA) the composition is skewed to basic residues.

The protein belongs to the XPG/RAD2 endonuclease family. FEN1 subfamily. Interacts with PCNA. Three molecules of dnr-8/fen1 bind to one PCNA trimer with each molecule binding to one PCNA monomer. PCNA stimulates the nuclease activity without altering cleavage specificity. The cofactor is Mg(2+). Phosphorylated. Phosphorylation upon DNA damage induces relocalization to the nuclear plasma.

It localises to the nucleus. The protein localises to the nucleolus. The protein resides in the nucleoplasm. It is found in the mitochondrion. Functionally, structure-specific nuclease with 5'-flap endonuclease and 5'-3' exonuclease activities involved in DNA replication and repair. During DNA replication, cleaves the 5'-overhanging flap structure that is generated by displacement synthesis when DNA polymerase encounters the 5'-end of a downstream Okazaki fragment. It enters the flap from the 5'-end and then tracks to cleave the flap base, leaving a nick for ligation. Also involved in the long patch base excision repair (LP-BER) pathway, by cleaving within the apurinic/apyrimidinic (AP) site-terminated flap. Acts as a genome stabilization factor that prevents flaps from equilibrating into structures that lead to duplications and deletions. Also possesses 5'-3' exonuclease activity on nicked or gapped double-stranded DNA, and exhibits RNase H activity. Also involved in replication and repair of rDNA and in repairing mitochondrial DNA. In Neurospora crassa (strain ATCC 24698 / 74-OR23-1A / CBS 708.71 / DSM 1257 / FGSC 987), this protein is Flap endonuclease 1 (dnr-8).